The chain runs to 923 residues: Cell cycle and apoptosis regulator protein 2 (923 aa).

Positions 1-35 (MSQFKRQRINPLPGGRNFSGTASTSLLGPPPGLLT) are disordered. Phosphothreonine is present on T35. At K112 the chain carries N6-acetyllysine; by KAT8. Residue K123 is modified to N6-methyllysine. S124 is subject to Phosphoserine. Disordered stretches follow at residues 178-218 (LNRF…KKPR), 446-510 (KAAE…PAVI), and 568-643 (VSPP…SEDL). R180 carries the omega-N-methylarginine modification. The span at 188-200 (GRLDQGRSDDYDS) shows a compositional bias: basic and acidic residues. K215 carries the N6-acetyllysine; by KAT8 modification. A compositionally biased stretch (low complexity) spans 446–458 (KAAEAAPPTQEAQ). T454 is subject to Phosphothreonine; by ATM, ATR and CK2. T484 bears the Phosphothreonine mark. S569 is subject to Phosphoserine. Residues 572-602 (EPEKEEAAKEEATKEEEAIKEEVVKEPKDEA) show a composition bias toward basic and acidic residues. K591 is covalently cross-linked (Glycyl lysine isopeptide (Lys-Gly) (interchain with G-Cter in SUMO2 and SUMO3); alternate). K591 participates in a covalent cross-link: Glycyl lysine isopeptide (Lys-Gly) (interchain with G-Cter in SUMO2); alternate. An interaction with MCC region spans residues 610-670 (ESEAPLKEDG…EEFAGAKLED (61 aa)). Phosphoserine occurs at positions 627, 675, 678, 681, 687, and 808. Positions 704–923 (DCLLAFVFFD…VEKEEPAPSN (220 aa)) are interaction with NR1D1. A coiled-coil region spans residues 829 to 909 (LENKIHTLEL…QLEIQRVVEK (81 aa)). T897 carries the phosphothreonine modification.

In terms of assembly, component of the DBIRD complex. Interacts with ZNF326/ZIRD; the interaction is direct. Interacts (via N-terminus) with SIRT1, which inhibits the deacetylation of substrates. Interacts (via N-terminus) with SUV39H1; this interaction abolishes the interaction with SIRT1. Component of a nuclear receptor-mediated transcription complex composed of at least ZNF335, CCAR2 and EMSY; the complex stimulates the transcription of nuclear receptor target genes such as SOX9 and HOXA1. Within the complex interacts with EMSY and interacts with ZNF335 (via C-terminus). Components of this complex may associate with components of a histone methylation complex to form a complex at least composed of ZNF335, HCFC1, CCAR2, EMSY, MKI67, RBBP5, ASH2L and WDR5. Within this complex, interacts with ASH2L. Interacts with NR1D1. Interacts (via N-terminus) with ESR1 and ESR2. Interacts (via N-terminus) with HDAC3 (via C-terminus). Interacts with HDAC1 and MED2F. Interacts with MCC. Interacts (via N-terminus) with NR1H2 and NR1H3 in a ligand-independent manner. Interacts with CSNK2A1. Interacts (via N-terminus) with p53/TP53. Interacts (via N-terminus) with BRCA1 (via the BRCT domains). Interacts (via N-terminus) with CHEK2 (via protein kinase domain). Interacts with PSEM3. Interacts (via N-terminus) with PSIA3 and SENP1. The sumoylated form shows a preferential interaction with SIRT1 as compared to its unmodified form. Interacts with CECR2; may form part of the CERF-1 and/or CEF-5 ISWI chromatin remodeling complexes in embryonic stem cells. ATM/ATR-mediated phosphorylation at Thr-454 upon DNA damage promotes binding to SIRT1. Phosphorylation at Thr-454 promotes its sumoylation by switching the binding partner of CCAR2 from SENP1 to PIAS3. Post-translationally, acetylation at Lys-112 and Lys-215 by KAT8 prevents inhibitory binding to SIRT1 and increases its deacetylase activity. In terms of processing, genotoxic stress induces its sumoylation and sumoylation promotes the SIRT1-CCAR2 interaction which in turn inhibits SIRT1-mediated deacetylation of p53/TP53. Sumoylation leads to transcriptional activation of p53/TP53 by sequestering SIRT1 from p53/TP53. Desumoylated by SENP1. In terms of tissue distribution, expressed in gastric carcinoma tissue and the expression gradually increases with the progression of the carcinoma (at protein level). Expressed ubiquitously in normal tissues. Expressed in 84 to 100% of neoplastic breast, lung, and colon tissues.

It is found in the nucleus. It localises to the cytoplasm. Its subcellular location is the cytoskeleton. The protein resides in the spindle. Core component of the DBIRD complex, a multiprotein complex that acts at the interface between core mRNP particles and RNA polymerase II (RNAPII) and integrates transcript elongation with the regulation of alternative splicing: the DBIRD complex affects local transcript elongation rates and alternative splicing of a large set of exons embedded in (A + T)-rich DNA regions. Inhibits SIRT1 deacetylase activity leading to increasing levels of p53/TP53 acetylation and p53-mediated apoptosis. Inhibits SUV39H1 methyltransferase activity. Mediates ligand-dependent transcriptional activation by nuclear hormone receptors. Plays a critical role in maintaining genomic stability and cellular integrity following UV-induced genotoxic stress. Regulates the circadian expression of the core clock components NR1D1 and BMAL1. Enhances the transcriptional repressor activity of NR1D1 through stabilization of NR1D1 protein levels by preventing its ubiquitination and subsequent degradation. Represses the ligand-dependent transcriptional activation function of ESR2. Acts as a regulator of PCK1 expression and gluconeogenesis by a mechanism that involves, at least in part, both NR1D1 and SIRT1. Negatively regulates the deacetylase activity of HDAC3 and can alter its subcellular localization. Positively regulates the beta-catenin pathway (canonical Wnt signaling pathway) and is required for MCC-mediated repression of the beta-catenin pathway. Represses ligand-dependent transcriptional activation function of NR1H2 and NR1H3 and inhibits the interaction of SIRT1 with NR1H3. Plays an important role in tumor suppression through p53/TP53 regulation; stabilizes p53/TP53 by affecting its interaction with ubiquitin ligase MDM2. Represses the transcriptional activator activity of BRCA1. Inhibits SIRT1 in a CHEK2 and PSEM3-dependent manner and inhibits the activity of CHEK2 in vitro. The chain is Cell cycle and apoptosis regulator protein 2 (CCAR2) from Homo sapiens (Human).